The sequence spans 200 residues: MELMVKGAAALTVSEATFGREFNEALVHQVVVAYAAGARQGTRAQKTRSEVSGGGAKPWRQKGTGRARAGTIRSPLWRTGGVTFAAKPQDHSQKVNKKMYRGAMKSILSELVRQERLIVVDNFSVEAPKTKELVAKLKELELNDVLIVTGEVDENLFLAARNLYKVDARDVAGIDPVSLIAFNKVLMTADAVKQVEEMLA.

The tract at residues 42–65 (TRAQKTRSEVSGGGAKPWRQKGTG) is disordered.

Belongs to the universal ribosomal protein uL4 family. Part of the 50S ribosomal subunit.

Its function is as follows. One of the primary rRNA binding proteins, this protein initially binds near the 5'-end of the 23S rRNA. It is important during the early stages of 50S assembly. It makes multiple contacts with different domains of the 23S rRNA in the assembled 50S subunit and ribosome. In terms of biological role, forms part of the polypeptide exit tunnel. The protein is Large ribosomal subunit protein uL4 of Vibrio vulnificus (strain CMCP6).